The sequence spans 148 residues: Respiratory supercomplex factor 1, mitochondrial (148 aa).

In terms of domain architecture, HIG1 spans leucine 9–glutamate 100. 2 helical membrane passes run proline 36–tyrosine 53 and isoleucine 72–tyrosine 89. Residues tyrosine 89–glycine 148 adopt a coiled-coil conformation.

Belongs to the RCF1 family. As to quaternary structure, associates with the respiratory chain complex III/complex IV supercomplex.

It is found in the mitochondrion membrane. Functionally, cytochrome c oxidase subunit which plays a role in assembly of respiratory supercomplexes. The chain is Respiratory supercomplex factor 1, mitochondrial (RCF1) from Ajellomyces dermatitidis (strain ER-3 / ATCC MYA-2586) (Blastomyces dermatitidis).